The sequence spans 276 residues: Ribosomal RNA small subunit methyltransferase A (276 aa).

His15, Leu17, Gly42, Glu64, Asp89, and Asn108 together coordinate S-adenosyl-L-methionine.

It belongs to the class I-like SAM-binding methyltransferase superfamily. rRNA adenine N(6)-methyltransferase family. RsmA subfamily.

It localises to the cytoplasm. It carries out the reaction adenosine(1518)/adenosine(1519) in 16S rRNA + 4 S-adenosyl-L-methionine = N(6)-dimethyladenosine(1518)/N(6)-dimethyladenosine(1519) in 16S rRNA + 4 S-adenosyl-L-homocysteine + 4 H(+). Specifically dimethylates two adjacent adenosines (A1518 and A1519) in the loop of a conserved hairpin near the 3'-end of 16S rRNA in the 30S particle. May play a critical role in biogenesis of 30S subunits. This Prochlorococcus marinus (strain MIT 9515) protein is Ribosomal RNA small subunit methyltransferase A.